The primary structure comprises 383 residues: Protein phosphatase 2C homolog 4 (383 aa).

A PPM-type phosphatase domain is found at 51-356 (SLGLCTARGD…DDITCLVVRL (306 aa)). D92, D308, and D347 together coordinate Mn(2+).

This sequence belongs to the PP2C family. As to quaternary structure, monomer. It depends on Mg(2+) as a cofactor. Requires Mn(2+) as cofactor.

The protein localises to the vacuole membrane. The catalysed reaction is O-phospho-L-seryl-[protein] + H2O = L-seryl-[protein] + phosphate. It catalyses the reaction O-phospho-L-threonyl-[protein] + H2O = L-threonyl-[protein] + phosphate. In terms of biological role, has a role in the regulation of vacuole fusion. This is Protein phosphatase 2C homolog 4 (ptc4) from Schizosaccharomyces pombe (strain 972 / ATCC 24843) (Fission yeast).